A 1299-amino-acid polypeptide reads, in one-letter code: DNA-directed RNA polymerase subunit beta' (1299 aa).

Zn(2+) is bound by residues Cys-60, Cys-62, Cys-75, and Cys-78. The Mg(2+) site is built by Asp-535, Asp-537, and Asp-539. Zn(2+)-binding residues include Cys-877, Cys-954, Cys-961, and Cys-964.

The protein belongs to the RNA polymerase beta' chain family. The RNAP catalytic core consists of 2 alpha, 1 beta, 1 beta' and 1 omega subunit. When a sigma factor is associated with the core the holoenzyme is formed, which can initiate transcription. The cofactor is Mg(2+). It depends on Zn(2+) as a cofactor.

It carries out the reaction RNA(n) + a ribonucleoside 5'-triphosphate = RNA(n+1) + diphosphate. Functionally, DNA-dependent RNA polymerase catalyzes the transcription of DNA into RNA using the four ribonucleoside triphosphates as substrates. The chain is DNA-directed RNA polymerase subunit beta' from Paenarthrobacter aurescens (strain TC1).